The following is a 62-amino-acid chain: Small ribosomal subunit protein eS27 (62 aa).

Positions 17, 20, 36, and 39 each coordinate Zn(2+). Residues 17-39 (CPDCENEQLVFEKATSVVECTVC) form a C4-type zinc finger.

Belongs to the eukaryotic ribosomal protein eS27 family. As to quaternary structure, part of the 30S ribosomal subunit. Requires Zn(2+) as cofactor.

The sequence is that of Small ribosomal subunit protein eS27 from Methanocorpusculum labreanum (strain ATCC 43576 / DSM 4855 / Z).